Here is a 1654-residue protein sequence, read N- to C-terminus: Mediator of RNA polymerase II transcription subunit 12 (1654 aa).

Disordered stretches follow at residues 52–72 (DLNGDNSRSQHTAGSGVLSGN) and 1481–1530 (SKQT…SFQT). Over residues 1515–1530 (PLSSARPSSEAASFQT) the composition is skewed to polar residues.

It belongs to the Mediator complex subunit 12 family. As to quaternary structure, component of the SRB8-11 complex, which itself associates with the Mediator complex.

Its subcellular location is the nucleus. Component of the SRB8-11 complex. The SRB8-11 complex is a regulatory module of the Mediator complex which is itself involved in regulation of basal and activated RNA polymerase II-dependent transcription. The SRB8-11 complex may be involved in the transcriptional repression of a subset of genes regulated by Mediator. It may inhibit the association of the Mediator complex with RNA polymerase II to form the holoenzyme complex. In Scheffersomyces stipitis (strain ATCC 58785 / CBS 6054 / NBRC 10063 / NRRL Y-11545) (Yeast), this protein is Mediator of RNA polymerase II transcription subunit 12 (SRB8).